We begin with the raw amino-acid sequence, 164 residues long: Nucleotide-binding protein EF_1165 (164 aa).

Belongs to the YajQ family.

In terms of biological role, nucleotide-binding protein. The chain is Nucleotide-binding protein EF_1165 from Enterococcus faecalis (strain ATCC 700802 / V583).